The sequence spans 494 residues: Alpha-amylase 1 (494 aa).

The first 18 residues, 1–18, serve as a signal peptide directing secretion; that stretch reads MFLAKSIVCLALLAVANA. Cysteines 46 and 102 form a disulfide. Residues asparagine 116, arginine 165, and aspartate 174 each coordinate Ca(2+). A disulfide bridge links cysteine 153 with cysteine 167. A chloride-binding site is contributed by arginine 202. Residue aspartate 204 is the Nucleophile of the active site. Histidine 208 contributes to the Ca(2+) binding site. Residue glutamate 241 is the Proton donor of the active site. 2 residues coordinate chloride: asparagine 304 and arginine 343. The interval 350–370 is disordered; the sequence is FTDTDQGPPTTDGQNIASPSF. The span at 351 to 363 shows a compositional bias: low complexity; sequence TDTDQGPPTTDGQ. Cystine bridges form between cysteine 376–cysteine 382 and cysteine 448–cysteine 460.

It belongs to the glycosyl hydrolase 13 family. As to quaternary structure, monomer. Ca(2+) serves as cofactor. The cofactor is chloride.

It catalyses the reaction Endohydrolysis of (1-&gt;4)-alpha-D-glucosidic linkages in polysaccharides containing three or more (1-&gt;4)-alpha-linked D-glucose units.. This Drosophila ananassae (Fruit fly) protein is Alpha-amylase 1 (Amy35).